The sequence spans 106 residues: UPF0145 protein PputGB1_2909 (106 aa).

The protein belongs to the UPF0145 family.

This is UPF0145 protein PputGB1_2909 from Pseudomonas putida (strain GB-1).